The sequence spans 111 residues: uncharacterized protein (111 aa).

This is an uncharacterized protein from Saccharomyces cerevisiae (strain ATCC 204508 / S288c) (Baker's yeast).